A 272-amino-acid polypeptide reads, in one-letter code: Putative G-protein coupled receptor GPR32P1 (272 aa).

Positions 1–24 (MNGVSEGTRGCSDRQPGALTQGHS) are disordered. At 1-46 (MNGVSEGTRGCSDRQPGALTQGHSCSRKMNASRCLSEEVGSLRPLT) the chain is on the extracellular side. N30 carries an N-linked (GlcNAc...) asparagine glycan. A helical transmembrane segment spans residues 47-67 (MAVLSASFVVGVLGNGLVPWV). Topologically, residues 68 to 78 (TVFRMARTVST) are cytoplasmic. The helical transmembrane segment at 79–99 (VCFFHLALADFMLSLSLPILV) threads the bilayer. The Extracellular segment spans residues 100–116 (YYIVSRQWLLGEWACKL). The cysteines at positions 114 and 191 are disulfide-linked. The chain crosses the membrane as a helical span at residues 117-137 (YTGFVFLTFSTSNCLLVLISV). The Cytoplasmic portion of the chain corresponds to 138–158 (DRCISVLYPVWALNHRTEQRA). Residues 159-179 (SWLAFGVWLLAAALCSAHLKF) traverse the membrane as a helical segment. At 180 to 213 (RTTRKWNGCMQCYLQFNLENETAQMWTQEVFGRQ) the chain is on the extracellular side. N-linked (GlcNAc...) asparagine glycosylation is present at N199. Residues 214–234 (MAVIMAHFLLGFLGPLAIIGT) form a helical membrane-spanning segment. At 235–272 (CAHLIRAKLLREGWVHANRPKRLLLVLVSALSAGSHLT) the chain is on the cytoplasmic side.

The protein belongs to the G-protein coupled receptor 1 family.

It localises to the cell membrane. Functionally, orphan receptor. The protein is Putative G-protein coupled receptor GPR32P1 (GPR32P1) of Homo sapiens (Human).